A 300-amino-acid chain; its full sequence is MKIDLTTLVTESRNQASEQIDVLSTVEMLTVINKEDQKVALAVEAILPQIAEVVDAIAVAFQCGGRLIYIGAGTSGRLGILDASECPPTYGSNPDLVVGLIAGGHKAILKAVENAEDNRELGASDLQDLGLNEKDVLVGIAASGRTPYVLGAMAYAKSVGATVATLSCNPNSPMTELADINMTPVVGPEIVTGSSRMKAGTAQKLVLNMLTTGAMIRTGKVFGNLMVDVEATNAKLVQRQKNIVIEATGCSETEAAESLSQCNNHCKTAILIVLSGLDAKSATDKLTEYNGFIRDALANS.

The SIS domain occupies 57–220 (IAVAFQCGGR…TTGAMIRTGK (164 aa)). E85 serves as the catalytic Proton donor. Residue E116 is part of the active site.

It belongs to the GCKR-like family. MurNAc-6-P etherase subfamily. As to quaternary structure, homodimer.

The enzyme catalyses N-acetyl-D-muramate 6-phosphate + H2O = N-acetyl-D-glucosamine 6-phosphate + (R)-lactate. The protein operates within amino-sugar metabolism; 1,6-anhydro-N-acetylmuramate degradation. It participates in amino-sugar metabolism; N-acetylmuramate degradation. It functions in the pathway cell wall biogenesis; peptidoglycan recycling. Its function is as follows. Specifically catalyzes the cleavage of the D-lactyl ether substituent of MurNAc 6-phosphate, producing GlcNAc 6-phosphate and D-lactate. Together with AnmK, is also required for the utilization of anhydro-N-acetylmuramic acid (anhMurNAc) either imported from the medium or derived from its own cell wall murein, and thus plays a role in cell wall recycling. This chain is N-acetylmuramic acid 6-phosphate etherase, found in Aliivibrio salmonicida (strain LFI1238) (Vibrio salmonicida (strain LFI1238)).